The sequence spans 538 residues: Zinc finger protein with KRAB and SCAN domains 3 (538 aa).

Serine 42 bears the Phosphoserine mark. Positions 46 to 128 constitute an SCAN box domain; sequence RERFRGFRYP…VLLEYLERQL (83 aa). Lysine 171 is covalently cross-linked (Glycyl lysine isopeptide (Lys-Gly) (interchain with G-Cter in SUMO2)). Threonine 207 carries the post-translational modification Phosphothreonine. Residues 214-274 enclose the KRAB domain; that stretch reads LKVEDVALTL…PAEELPEKEH (61 aa). Polar residues predominate over residues 226 to 236; that stretch reads EWTQQDSSQGN. Residues 226-274 form a disordered region; it reads EWTQQDSSQGNLCRDEKQENHGSLVSLGDEKQTKSRDLPPAEELPEKEH. The segment covering 253–274 has biased composition (basic and acidic residues); it reads GDEKQTKSRDLPPAEELPEKEH. 5 consecutive C2H2-type zinc fingers follow at residues 314–336, 342–364, 370–392, 398–420, and 426–448; these read HICH…RRIH, YECE…QRVH, YECE…QRTH, YECD…HRIH, and YQCS…QRIH. Threonine 449 is subject to Phosphothreonine. C2H2-type zinc fingers lie at residues 480–502 and 508–530; these read YKCN…QKIH and YQCN…QRSH.

This sequence belongs to the krueppel C2H2-type zinc-finger protein family.

It localises to the nucleus. The protein localises to the cytoplasm. Functionally, transcriptional factor that binds to the consensus sequence 5'-[GT][AG][AGT]GGGG-3' and acts as a repressor of autophagy. Specifically represses expression of genes involved in autophagy and lysosome biogenesis/function such as MAP1LC3B, ULK1 or WIPI2. Associates with chromatin at the ITGB4 and VEGF promoters. Also acts as a transcription activator and promotes cancer cell progression and/or migration in various tumors and myelomas. In Homo sapiens (Human), this protein is Zinc finger protein with KRAB and SCAN domains 3 (ZKSCAN3).